We begin with the raw amino-acid sequence, 1687 residues long: PH domain leucine-rich repeat-containing protein phosphatase 1 (1687 aa).

N-acetylmethionine is present on methionine 1. Disordered stretches follow at residues 1-96 (MEPA…GGGA) and 230-406 (AAAP…AAPD). A compositionally biased stretch (low complexity) spans 78–96 (APQPAAGGAAPVPAAGGGA). At serine 286 the chain carries Phosphoserine. Residues 314-326 (DTESFSLSPSAES) show a composition bias toward polar residues. Serine 372 carries the phosphoserine modification. Positions 492–592 (RIQLSGMYNV…WLRQVSKVAS (101 aa)) constitute a PH domain. LRR repeat units lie at residues 594–615 (RISS…LFYS), 617–638 (DLTH…PAAR), 648–669 (KLKS…VCSI), 671–692 (TLAE…VGDM), 694–715 (NLQT…LESM), 717–739 (QLSY…EKLT), 740–760 (AVDK…QALR), 764–785 (HIKH…EVDF), 788–809 (HVTQ…IFNN), 829–850 (FLKA…PVPN), 851–872 (YLSY…VCES), 874–895 (KLEV…LFCN), 897–918 (SLRK…LERT), 919–940 (SVEV…LLMK), 943–964 (SLRF…TLSE), 969–989 (ILQE…PLLT), 993–1014 (RLKI…KMAK), 1017–1038 (ELEE…IMNC), 1040–1061 (RMHT…MQLP), 1062–1083 (EVKC…ENLP), and 1085–1106 (KLQE…SLEL). The PPM-type phosphatase domain maps to 1131–1378 (SHGYTEASGV…DSISAVVVQL (248 aa)). 4 residues coordinate Mn(2+): aspartate 1166, glycine 1167, lysine 1330, and aspartate 1369. Disordered regions lie at residues 1414-1465 (DRPS…SSPA) and 1604-1687 (PGGY…DTPL). The segment covering 1424–1445 (SSSSGMASEISSELSTSEMSSE) has biased composition (low complexity). Over residues 1649-1669 (LPPPPQPPQPQPQPQPQPQPQ) the composition is skewed to pro residues. The PDZ-binding signature appears at 1685–1687 (TPL).

As to quaternary structure, interacts with the nucleotide free form of K-Ras (KRAS) via its LRR repeats. Interacts with AKT2, AKT3 and PRKCB. Interacts with WDR48 and USP12. Mn(2+) serves as cofactor. As to expression, isoforms 1 and 2 are expressed in the retina.

It is found in the cytoplasm. Its subcellular location is the membrane. The protein localises to the nucleus. It carries out the reaction O-phospho-L-seryl-[protein] + H2O = L-seryl-[protein] + phosphate. The enzyme catalyses O-phospho-L-threonyl-[protein] + H2O = L-threonyl-[protein] + phosphate. Its activity is regulated as follows. Insensitive to okadaic acid. Deubiquitination by WDR48-USP12 complex positively regulates PHLPP1 stability. Functionally, protein phosphatase involved in regulation of Akt and PKC signaling. Mediates dephosphorylation in the C-terminal domain hydrophobic motif of members of the AGC Ser/Thr protein kinase family; specifically acts on 'Ser-473' of AKT2 and AKT3, 'Ser-660' of PRKCB and 'Ser-657' of PRKCA. Isoform 2 seems to have a major role in regulating Akt signaling in hippocampal neurons. Akt regulates the balance between cell survival and apoptosis through a cascade that primarily alters the function of transcription factors that regulate pro- and antiapoptotic genes. Dephosphorylation of 'Ser-473' of Akt triggers apoptosis and suppression of tumor growth. Dephosphorylation of PRKCA and PRKCB leads to their destabilization and degradation. Dephosphorylates STK4 on 'Thr-387' leading to STK4 activation and apoptosis. Dephosphorylates RPS6KB1 and is involved in regulation of cap-dependent translation. Inhibits cancer cell proliferation and may act as a tumor suppressor. Dephosphorylates RAF1 inhibiting its kinase activity. May act as a negative regulator of K-Ras signaling in membrane rafts. Involved in the hippocampus-dependent long-term memory formation. Involved in circadian control by regulating the consolidation of circadian periodicity after resetting. Involved in development and function of regulatory T-cells. In Mus musculus (Mouse), this protein is PH domain leucine-rich repeat-containing protein phosphatase 1 (Phlpp1).